The chain runs to 489 residues: Betaine aldehyde dehydrogenase (489 aa).

Positions 26 and 93 each coordinate K(+). 150–152 (GAW) contacts NAD(+). Catalysis depends on Lys162, which acts as the Charge relay system. 176–179 (KPSE) provides a ligand contact to NAD(+). Residue Val180 participates in K(+) binding. Residue 229–232 (GVET) coordinates NAD(+). Leu245 lines the K(+) pocket. Glu251 acts as the Proton acceptor in catalysis. NAD(+) contacts are provided by Gly253, Cys285, and Glu386. Cys285 (nucleophile) is an active-site residue. Residue Cys285 is modified to Cysteine sulfenic acid (-SOH). Positions 456 and 459 each coordinate K(+). Glu463 (charge relay system) is an active-site residue.

It belongs to the aldehyde dehydrogenase family. Dimer of dimers. K(+) is required as a cofactor.

The catalysed reaction is betaine aldehyde + NAD(+) + H2O = glycine betaine + NADH + 2 H(+). Its pathway is amine and polyamine biosynthesis; betaine biosynthesis via choline pathway; betaine from betaine aldehyde: step 1/1. Involved in the biosynthesis of the osmoprotectant glycine betaine. Catalyzes the irreversible oxidation of betaine aldehyde to the corresponding acid. The chain is Betaine aldehyde dehydrogenase from Burkholderia vietnamiensis (strain G4 / LMG 22486) (Burkholderia cepacia (strain R1808)).